Here is a 219-residue protein sequence, read N- to C-terminus: Elongation factor Ts (219 aa).

The segment at Thr-82–Val-85 is involved in Mg(2+) ion dislocation from EF-Tu.

Belongs to the EF-Ts family.

The protein resides in the cytoplasm. Its function is as follows. Associates with the EF-Tu.GDP complex and induces the exchange of GDP to GTP. It remains bound to the aminoacyl-tRNA.EF-Tu.GTP complex up to the GTP hydrolysis stage on the ribosome. This Synechococcus sp. (strain CC9902) protein is Elongation factor Ts.